Consider the following 301-residue polypeptide: GTPase Era (301 aa).

An Era-type G domain is found at 4–173 (KAGFVALIGK…LECISKHLSP (170 aa)). Residues 12-19 (GKPNAGKS) are G1. 12-19 (GKPNAGKS) provides a ligand contact to GTP. The tract at residues 38-42 (NATRK) is G2. The G3 stretch occupies residues 64–67 (DTPG). Residues 64–68 (DTPGL) and 122–125 (SKID) contribute to the GTP site. Residues 122 to 125 (SKID) form a G4 region. Residues 152-154 (LSA) form a G5 region. One can recognise a KH type-2 domain in the interval 204–280 (LSDEIPYESD…FLNLQVIAQK (77 aa)).

It belongs to the TRAFAC class TrmE-Era-EngA-EngB-Septin-like GTPase superfamily. Era GTPase family. In terms of assembly, monomer.

The protein resides in the cytoplasm. The protein localises to the cell inner membrane. Functionally, an essential GTPase that binds both GDP and GTP, with rapid nucleotide exchange. Plays a role in 16S rRNA processing and 30S ribosomal subunit biogenesis and possibly also in cell cycle regulation and energy metabolism. The protein is GTPase Era of Helicobacter pylori (strain Shi470).